The chain runs to 89 residues: Small ribosomal subunit protein uS14A (89 aa).

Belongs to the universal ribosomal protein uS14 family. Part of the 30S ribosomal subunit. Contacts proteins S3 and S10.

Its function is as follows. Binds 16S rRNA, required for the assembly of 30S particles and may also be responsible for determining the conformation of the 16S rRNA at the A site. The protein is Small ribosomal subunit protein uS14A of Staphylococcus haemolyticus (strain JCSC1435).